We begin with the raw amino-acid sequence, 375 residues long: Succinyl-diaminopimelate desuccinylase (375 aa).

Zn(2+) is bound at residue H66. Residue D68 is part of the active site. Residue D99 coordinates Zn(2+). E133 serves as the catalytic Proton acceptor. Residues E134, E162, and H348 each contribute to the Zn(2+) site.

It belongs to the peptidase M20A family. DapE subfamily. As to quaternary structure, homodimer. The cofactor is Zn(2+). Requires Co(2+) as cofactor.

The catalysed reaction is N-succinyl-(2S,6S)-2,6-diaminopimelate + H2O = (2S,6S)-2,6-diaminopimelate + succinate. Its pathway is amino-acid biosynthesis; L-lysine biosynthesis via DAP pathway; LL-2,6-diaminopimelate from (S)-tetrahydrodipicolinate (succinylase route): step 3/3. Its function is as follows. Catalyzes the hydrolysis of N-succinyl-L,L-diaminopimelic acid (SDAP), forming succinate and LL-2,6-diaminopimelate (DAP), an intermediate involved in the bacterial biosynthesis of lysine and meso-diaminopimelic acid, an essential component of bacterial cell walls. The chain is Succinyl-diaminopimelate desuccinylase from Aeromonas salmonicida (strain A449).